A 1248-amino-acid chain; its full sequence is MSKVIGYIDYGDPDGNEEPSKQNGEYIDYSNENGYNAYHSVNGGYDKDNNNHHHHNQEEDYDYDNNTHVNYLTTKHSQFQLSRGRLYQGHQSSHIIYPHQSYKLSNSGESMNRSINQSKEEDHLENSLHDDEYLYGYEDHHDDQASSISQESSQGLDETDFDNIDKYFESNQHLLLQTLQNNNNNNSNSNSNSNSNSNNNNNNNNNNNNNNNNNNNTKNNITDENQLEIHLNDLSIDSDNSNNKINKQYVNSDNSNNNNSNNSNNNNIGSNINSNCNIENEKNSNNTDDNNNNNNIENVNKINIEDNNNNNNNNNNNNNNNNNNNNNNNNNNNNNNNKIEVISNKPIQLFSDYDPPILTTSTSTSQSKIKTQQPFLFFSSNYLNSSSTELDLSEQELNEFPIFDEKEIVQGYKIIDLSFNNIKSIPLDAFTNISNLEQLIMFNNNLSDVPSSIEFLKHLTILDLSHNNLHEICRELGNLSFLRELYLSNNSLKKFPTTGNLYNLKKLILDNNQITTIPIECVEPLIQLQTLDLSFNKIGTITSSTTTTTTTTTTNNNNNNGGGGSIYQKMKNLKQLNLSHNELQEIPSSLRHLSKLHSLSIDYNQISVLPDKVVASLSRLAKLTISNNKIKQLPFAINNLSSLIELNASNNVIELLPDSICYLSNLKKLNLNNNNLKELPSNIGFLTKLVDLQLYNNQISSLPISFLKCRSIREIGTDGNPLPSYYHLGIKAIRYHIKNPDCDLDDLNSISPTIDSSTIEQQQQPIQLFGGGNYIDSSNNNGNESFCNSGELSPLTDSLECIEMPPPMQISENLRKPLNVNSPSYPFQKLDPIPQSLYSSSNPRSHTESDIQKLKNNDETITTTNSSISTTSSPPSLLFGVSINGNGIISTTTTTTTTTTTTNGKTLSRQSSFQQIPQQFNLSTSTTNITKLPRIKYTWEIDFDEIQFFNLIGQGGFSKVYHGVWRSKDVAIKQIELQNNKSLDDFRREVGILSKLKPHENLLAYYGACKHANYCYIITEYLPRGSLHDLLHREQLMKLDFKQKVSFAICVALGCYHLSTYEPPIYHTDLKTKNLLVTNALKIKIADFGLASFAKKSLTTIINNNNNTNNTATSSTTTSSANGANSISNNNNNGTTSVDQSRLAYAFYAAPEILNSKHFSEKSDVFSFGTILWELVTNKIPFDGMDPYEVKELLKSGKRLEIPENCNEVLKNIIQDCWNQQSEDRPTFLSIYHRLENLMKSITKKRRF.

5 disordered regions span residues 1–26 (MSKVIGYIDYGDPDGNEEPSKQNGEY), 40–61 (SVNGGYDKDNNNHHHHNQEEDY), 100–125 (QSYKLSNSGESMNRSINQSKEEDHLE), 180–220 (QNNN…TKNN), and 235–338 (SIDS…NNNK). A compositionally biased stretch (polar residues) spans 102 to 117 (YKLSNSGESMNRSINQ). Over residues 181-216 (NNNNNNSNSNSNSNSNSNNNNNNNNNNNNNNNNNNN) the composition is skewed to low complexity. LRR repeat units follow at residues 386 to 407 (SSTELDLSEQELNEFPIFDEKE), 411 to 432 (GYKIIDLSFNNIKSIPLDAFTN), 435 to 457 (NLEQLIMFNNNLSDVPSSIEFLK), 458 to 480 (HLTILDLSHNNLHEICRELGNLS), 481 to 502 (FLRELYLSNNSLKKFPTTGNLY), 503 to 524 (NLKKLILDNNQITTIPIECVEP), 527 to 548 (QLQTLDLSFNKIGTITSSTTTT), 572 to 593 (NLKQLNLSHNELQEIPSSLRHL), 595 to 616 (KLHSLSIDYNQISVLPDKVVAS), 619 to 641 (RLAKLTISNNKIKQLPFAINNLS), 642 to 663 (SLIELNASNNVIELLPDSICYL), 665 to 687 (NLKKLNLNNNNLKELPSNIGFLT), and 688 to 708 (KLVDLQLYNNQISSLPISFLK). The interval 825-873 (YPFQKLDPIPQSLYSSSNPRSHTESDIQKLKNNDETITTTNSSISTTSS) is disordered. Residues 845–858 (SHTESDIQKLKNND) show a composition bias toward basic and acidic residues. The span at 860–873 (TITTTNSSISTTSS) shows a compositional bias: low complexity. One can recognise a Protein kinase domain in the interval 946–1239 (IQFFNLIGQG…SIYHRLENLM (294 aa)). ATP contacts are provided by residues 952 to 960 (IGQGGFSKV) and lysine 973. The active-site Proton acceptor is aspartate 1069. Residues 1106–1135 (NNTNNTATSSTTTSSANGANSISNNNNNGT) form a disordered region.

It belongs to the protein kinase superfamily. TKL Ser/Thr protein kinase family.

The enzyme catalyses L-seryl-[protein] + ATP = O-phospho-L-seryl-[protein] + ADP + H(+). It carries out the reaction L-threonyl-[protein] + ATP = O-phospho-L-threonyl-[protein] + ADP + H(+). This Dictyostelium discoideum (Social amoeba) protein is Probable serine/threonine-protein kinase DDB_G0278509.